We begin with the raw amino-acid sequence, 432 residues long: Adenylosuccinate synthetase (432 aa).

GTP is bound by residues 12–18 and 40–42; these read GDEGKGK and GHT. Residue aspartate 13 is the Proton acceptor of the active site. Mg(2+)-binding residues include aspartate 13 and glycine 40. IMP is bound by residues 13 to 16, 38 to 41, threonine 128, arginine 142, glutamine 223, threonine 238, and arginine 302; these read DEGK and NAGH. Catalysis depends on histidine 41, which acts as the Proton donor. Substrate is bound at residue 298-304; the sequence is TVTGRPR. Residues arginine 304, 330 to 332, and 412 to 414 contribute to the GTP site; these read LLD and SVG.

The protein belongs to the adenylosuccinate synthetase family. As to quaternary structure, homodimer. Mg(2+) is required as a cofactor.

Its subcellular location is the cytoplasm. The catalysed reaction is IMP + L-aspartate + GTP = N(6)-(1,2-dicarboxyethyl)-AMP + GDP + phosphate + 2 H(+). The protein operates within purine metabolism; AMP biosynthesis via de novo pathway; AMP from IMP: step 1/2. Plays an important role in the de novo pathway of purine nucleotide biosynthesis. Catalyzes the first committed step in the biosynthesis of AMP from IMP. The sequence is that of Adenylosuccinate synthetase from Limosilactobacillus reuteri (strain DSM 20016) (Lactobacillus reuteri).